A 286-amino-acid chain; its full sequence is CDP-diacylglycerol--serine O-phosphatidyltransferase (286 aa).

Helical transmembrane passes span 15–35, 95–115, 135–155, 167–187, and 207–227; these read ILPSAMTVLSICAGLTAIKFA, MLSKWPVGWVVVLLYAVCVVL, EFFVGMPAPAGAVSMIGLLAL, VWFLSFWVTGTSILLVSGIPM, and LAICAAAAVLAPYLLIWVIII.

This sequence belongs to the CDP-alcohol phosphatidyltransferase class-I family.

Its subcellular location is the cell membrane. The enzyme catalyses a CDP-1,2-diacyl-sn-glycerol + L-serine = a 1,2-diacyl-sn-glycero-3-phospho-L-serine + CMP + H(+). The protein is CDP-diacylglycerol--serine O-phosphatidyltransferase (pssA) of Mycobacterium bovis (strain ATCC BAA-935 / AF2122/97).